The primary structure comprises 637 residues: MAAAPPLTKAEYLKRYLSGTDAGLEGGPEAGRKRRKKRPKPGGAGGKGMRIVDDDVGWAAISTAKPEKEEEEDGDLPVVAEFVDERPEEVKQMEAFRSSAKWKLLGGHGEDGHFHHDDQDSSPPRRVRHDTPDTSPPRKARHDTPDPSPPRKARHDTPDTSPPRKARHDTPDPSPPRKARHDTPDPSPPRRVRHDTPDLSPPRRVRHDTPDLSPPRRVRHDTPDPSPPRRVRHDLDASPPRKSHRNSSAVSPRRGHHGSLGTSSPRQTHNHSPTAAQHRRTLDSSGTQHLRRAHHESPDLELHKAKSSKAAERAPSKAASQSGLGPSHPSLSTNSKYEHDSDLSPPRKRQAKAHFEAKKQLDSKGVYQKASDSDLSPPRKKKNSGHQDSDSDLSPPRNRPRRQSSDSDLSPPRRRQRTKSSDSDLSPPRRSPRPGKKTAHMYSGAKTGLVTDVQREHQELKKQDQDTTDLGAQFEFTETVFRDKSGRKRNLKLERLEQRRKAEKDSERDELYAQWGKGLAQSRQQQQNVEDAMKEMQKPLARYIDDEDLDRMLREQEREGDPMANFIKKNKAKENKNKKVKPRYSGPAPPPNRFNIWPGYRWDGVDRSNGFEQKRFARLASKKAVEELAYKWSVEDM.

Residues 18–53 (SGTDAGLEGGPEAGRKRRKKRPKPGGAGGKGMRIVD) are disordered. A Glycyl lysine isopeptide (Lys-Gly) (interchain with G-Cter in SUMO2) cross-link involves residue Lys-65. Residues 104–470 (LLGGHGEDGH…KKQDQDTTDL (367 aa)) are disordered. Residues 108-119 (HGEDGHFHHDDQ) show a composition bias toward basic and acidic residues. Thr-131 carries the post-translational modification Phosphothreonine. Ser-135 bears the Phosphoserine mark. Thr-144 bears the Phosphothreonine mark. The residue at position 148 (Ser-148) is a Phosphoserine. Position 157 is a phosphothreonine (Thr-157). Ser-161 carries the post-translational modification Phosphoserine. Thr-170 carries the post-translational modification Phosphothreonine. Residue Ser-174 is modified to Phosphoserine. The residue at position 183 (Thr-183) is a Phosphothreonine. At Ser-187 the chain carries Phosphoserine. A phosphothreonine mark is found at Thr-196 and Thr-209. The residue at position 213 (Ser-213) is a Phosphoserine. At Thr-222 the chain carries Phosphothreonine. Ser-226, Ser-238, Ser-259, Ser-264, Ser-272, Ser-284, Ser-285, and Ser-297 each carry phosphoserine. Over residues 260–275 (LGTSSPRQTHNHSPTA) the composition is skewed to polar residues. Residues 295–315 (HESPDLELHKAKSSKAAERAP) show a composition bias toward basic and acidic residues. A compositionally biased stretch (polar residues) spans 318 to 335 (AASQSGLGPSHPSLSTNS). A phosphoserine mark is found at Ser-341 and Ser-344. The span at 353-362 (AHFEAKKQLD) shows a compositional bias: basic and acidic residues. Phosphoserine occurs at positions 371, 373, 376, 410, and 426. Residues 430-439 (RSPRPGKKTA) show a composition bias toward basic residues. The segment covering 453 to 465 (VQREHQELKKQDQ) has biased composition (basic and acidic residues). Residues 490–538 (NLKLERLEQRRKAEKDSERDELYAQWGKGLAQSRQQQQNVEDAMKEMQK) adopt a coiled-coil conformation. Tyr-512 is modified (phosphotyrosine). Positions 553 to 595 (LREQEREGDPMANFIKKNKAKENKNKKVKPRYSGPAPPPNRFN) are disordered. Ser-585 carries the post-translational modification Phosphoserine.

The protein belongs to the CWC26 family. As to quaternary structure, part of the activated spliceosome B/catalytic step 1 spliceosome, one of the forms of the spliceosome which has a well-formed active site but still cannot catalyze the branching reaction and is composed of at least 52 proteins, the U2, U5 and U6 snRNAs and the pre-mRNA. Component of the minor spliceosome, which splices U12-type introns.

It localises to the nucleus. Involved in pre-mRNA splicing as component of the activated spliceosome. As a component of the minor spliceosome, involved in the splicing of U12-type introns in pre-mRNAs. This Mus musculus (Mouse) protein is BUD13 homolog (Bud13).